A 284-amino-acid chain; its full sequence is TnP I resolvase (284 aa).

The Core-binding (CB) domain occupies 1–84 (MDVAKQFSSY…SLAKFNEFLI (84 aa)). The region spanning 107–282 (ASPTQIVELD…NQLQLKNKME (176 aa)) is the Tyr recombinase domain. Catalysis depends on residues R145, K170, H234, R237, and H260. Residue Y269 is the O-(3'-phospho-DNA)-tyrosine intermediate of the active site.

Belongs to the 'phage' integrase family.

Resolvase catalyzes the resolution (a site-specific recombination) of the cointegrated replicon to yield the final transposition products. The sequence is that of TnP I resolvase (tnpI) from Bacillus thuringiensis.